A 115-amino-acid chain; its full sequence is Large ribosomal subunit protein P2 (115 aa).

Residue methionine 1 is modified to N-acetylmethionine. Serine 17 and serine 19 each carry phosphoserine. Lysine 21 is modified (N6-acetyllysine; alternate). Residue lysine 21 is modified to N6-succinyllysine; alternate. Residues 78-90 (GSAAPAAGSAPAA) are compositionally biased toward low complexity. Residues 78 to 115 (GSAAPAAGSAPAAAEEKKDEKKEESEESDDDMGFGLFD) are disordered. Residues serine 79 and serine 86 each carry the phosphoserine modification. Residues 91–101 (AEEKKDEKKEE) show a composition bias toward basic and acidic residues. A phosphoserine mark is found at serine 102 and serine 105.

The protein belongs to the eukaryotic ribosomal protein P1/P2 family. As to quaternary structure, heterodimer with P1 at the lateral ribosomal stalk of the large ribosomal subunit.

Functionally, plays an important role in the elongation step of protein synthesis. The polypeptide is Large ribosomal subunit protein P2 (RPLP2) (Homo sapiens (Human)).